A 604-amino-acid polypeptide reads, in one-letter code: uncharacterized protein (604 aa).

An ABC transmembrane type-1 domain is found at 45–329 (LPLSFLTVLI…LGQVYNQLLM (285 aa)). 6 helical membrane passes run 49 to 69 (FLTVLIGTAVKLVIPILIGVY), 82 to 102 (LLIQLIFIISGLYVLNYAANV), 162 to 182 (VINLLTDLLLLAGVIIILFTL), 184 to 204 (PELTIAIMVTLPIMFFISTSL), 273 to 293 (LVEMTNAIGTAVLIWYGATLI), and 297 to 317 (TITIGVFVSFAFYLGMFWEPI). The region spanning 363–597 (ISFEEVEFSY…GGIYAGLVKA (235 aa)) is the ABC transporter domain. Residue 396–403 (GHTGSGKT) participates in ATP binding.

Belongs to the ABC transporter superfamily.

Its subcellular location is the cell membrane. This is an uncharacterized protein from Bacillus subtilis (strain 168).